A 184-amino-acid polypeptide reads, in one-letter code: GTP cyclohydrolase 1 (184 aa).

3 residues coordinate Zn(2+): C75, H78, and C146.

Belongs to the GTP cyclohydrolase I family. In terms of assembly, toroid-shaped homodecamer, composed of two pentamers of five dimers.

It carries out the reaction GTP + H2O = 7,8-dihydroneopterin 3'-triphosphate + formate + H(+). It functions in the pathway cofactor biosynthesis; 7,8-dihydroneopterin triphosphate biosynthesis; 7,8-dihydroneopterin triphosphate from GTP: step 1/1. This Streptococcus pneumoniae serotype 2 (strain D39 / NCTC 7466) protein is GTP cyclohydrolase 1.